Here is a 1120-residue protein sequence, read N- to C-terminus: Elongation factor-like GTPase 1 (1120 aa).

One can recognise a tr-type G domain in the interval 17–272 (ANIRNICVLA…LMKTLWGDYY (256 aa)). GTP is bound by residues 26 to 33 (AHVDHGKT), 92 to 96 (DSPGH), and 146 to 149 (NKID). The tract at residues 430-496 (PRPLTQEEIA…VESMTPKPVL (67 aa)) is disordered. 2 stretches are compositionally biased toward basic and acidic residues: residues 438-452 (IAQRRERARQRHAEK) and 475-484 (PKGEEPRGDE). Position 528 is an N6-acetyllysine (Lys-528). A disordered region spans residues 907-930 (ASDLAKEGQEENETCSGGNENQEL). Residues 920–930 (TCSGGNENQEL) show a composition bias toward polar residues.

This sequence belongs to the TRAFAC class translation factor GTPase superfamily. Classic translation factor GTPase family. In terms of assembly, associates with the 60S ribosomal subunit. Found in a complex consisting of the 60S ribosomal subunit, SBDS and EFL1. Interacts with SBDS and binds to GTP and GDP; the interaction with SBDS decreases EFL1 affinity for GDP and facilitates GDP release. In terms of tissue distribution, expressed at low levels in brain. Expression is highly increased in glioma tissues.

It catalyses the reaction GTP + H2O = GDP + phosphate + H(+). GTPase activity is stimulated in the presence of 60S ribosome subunits. Functionally, GTPase involved in the biogenesis of the 60S ribosomal subunit and translational activation of ribosomes. Together with SBDS, triggers the GTP-dependent release of EIF6 from 60S pre-ribosomes in the cytoplasm, thereby activating ribosomes for translation competence by allowing 80S ribosome assembly and facilitating EIF6 recycling to the nucleus, where it is required for 60S rRNA processing and nuclear export. This Homo sapiens (Human) protein is Elongation factor-like GTPase 1.